A 738-amino-acid chain; its full sequence is Alanine--tRNA ligase (738 aa).

Residues His564, His568, Cys666, and His670 each coordinate Zn(2+).

It belongs to the class-II aminoacyl-tRNA synthetase family. Homotetramer. The cofactor is Zn(2+).

The protein resides in the cytoplasm. The enzyme catalyses tRNA(Ala) + L-alanine + ATP = L-alanyl-tRNA(Ala) + AMP + diphosphate. Catalyzes the attachment of alanine to tRNA(Ala) in a two-step reaction: alanine is first activated by ATP to form Ala-AMP and then transferred to the acceptor end of tRNA(Ala). Also edits incorrectly charged Ser-tRNA(Ala) and Gly-tRNA(Ala) via its editing domain. This is Alanine--tRNA ligase (alaS) from Yersinia pestis bv. Antiqua (strain Antiqua).